The chain runs to 282 residues: Orotidine 5'-phosphate decarboxylase (282 aa).

Residue Lys-95 is the Proton donor of the active site.

The protein belongs to the OMP decarboxylase family. Type 2 subfamily.

It catalyses the reaction orotidine 5'-phosphate + H(+) = UMP + CO2. It functions in the pathway pyrimidine metabolism; UMP biosynthesis via de novo pathway; UMP from orotate: step 2/2. The polypeptide is Orotidine 5'-phosphate decarboxylase (Polaromonas naphthalenivorans (strain CJ2)).